The primary structure comprises 660 residues: FAST kinase domain-containing protein 3, mitochondrial (660 aa).

A mitochondrion-targeting transit peptide spans 1–57; sequence MALVTLRRNLYHLSDFRIHGALAALKTQQVNHVHKTVKEHLCPWFWSQHPGPIRVRF. In terms of domain architecture, RAP spans 591 to 649; that stretch reads VALCIDGPKRFCLNSKHLLGKEATKQRHLRLLGYQVVQIPYYEIEMLKSRLELVDYLQG.

Belongs to the FAST kinase family.

It localises to the mitochondrion. Functionally, required for normal mitochondrial respiration. Increases steady-state levels and half-lives of a subset of mature mitochondrial mRNAs MT-ND2, MT-ND3, MT-CYTB, MT-CO2, and MT-ATP8/6. Promotes MT-CO1 mRNA translation and increases mitochondrial complex IV assembly and activity. The protein is FAST kinase domain-containing protein 3, mitochondrial (FASTKD3) of Bos taurus (Bovine).